The chain runs to 125 residues: Antitoxin MazE5 (125 aa).

As to quaternary structure, forms a complex with cognate toxin MazF5.

Its function is as follows. Antitoxin component of a type II toxin-antitoxin (TA) system. Upon expression in M.smegmatis neutralizes the effect of cognate toxin MazF5. The chain is Antitoxin MazE5 (mazE5) from Mycobacterium tuberculosis (strain ATCC 25618 / H37Rv).